Reading from the N-terminus, the 404-residue chain is LL-diaminopimelate aminotransferase (404 aa).

Positions 15 and 42 each coordinate substrate. Pyridoxal 5'-phosphate-binding positions include Y72, 108–109 (AK), Y132, N188, Y219, and 247–249 (SFS). Positions 109, 132, and 188 each coordinate substrate. Residue K250 is modified to N6-(pyridoxal phosphate)lysine. Pyridoxal 5'-phosphate contacts are provided by R258 and N288. Substrate-binding residues include N288 and R384.

This sequence belongs to the class-I pyridoxal-phosphate-dependent aminotransferase family. LL-diaminopimelate aminotransferase subfamily. Homodimer. Pyridoxal 5'-phosphate is required as a cofactor.

It carries out the reaction (2S,6S)-2,6-diaminopimelate + 2-oxoglutarate = (S)-2,3,4,5-tetrahydrodipicolinate + L-glutamate + H2O + H(+). It functions in the pathway amino-acid biosynthesis; L-lysine biosynthesis via DAP pathway; LL-2,6-diaminopimelate from (S)-tetrahydrodipicolinate (aminotransferase route): step 1/1. In terms of biological role, involved in the synthesis of meso-diaminopimelate (m-DAP or DL-DAP), required for both lysine and peptidoglycan biosynthesis. Catalyzes the direct conversion of tetrahydrodipicolinate to LL-diaminopimelate. This is LL-diaminopimelate aminotransferase from Agathobacter rectalis (strain ATCC 33656 / DSM 3377 / JCM 17463 / KCTC 5835 / VPI 0990) (Eubacterium rectale).